Reading from the N-terminus, the 188-residue chain is Insulin-like peptide INSL6 (188 aa).

A signal peptide spans 1–22; the sequence is MKQLCCSCLLWLGLLLAPFSQE. Disulfide bonds link Cys33–Cys169, Cys45–Cys182, and Cys168–Cys173. Positions 53–158 are cleaved as a propeptide — connecting peptide; sequence FSMEEQSPMT…SGLFWGNHPQ (106 aa).

Belongs to the insulin family. Testis and prostate specific.

Its subcellular location is the secreted. May have a role in sperm development and fertilization. The polypeptide is Insulin-like peptide INSL6 (Insl6) (Rattus norvegicus (Rat)).